Consider the following 228-residue polypeptide: 2-C-methyl-D-erythritol 4-phosphate cytidylyltransferase (228 aa).

Belongs to the IspD/TarI cytidylyltransferase family. IspD subfamily.

It carries out the reaction 2-C-methyl-D-erythritol 4-phosphate + CTP + H(+) = 4-CDP-2-C-methyl-D-erythritol + diphosphate. It participates in isoprenoid biosynthesis; isopentenyl diphosphate biosynthesis via DXP pathway; isopentenyl diphosphate from 1-deoxy-D-xylulose 5-phosphate: step 2/6. Its function is as follows. Catalyzes the formation of 4-diphosphocytidyl-2-C-methyl-D-erythritol from CTP and 2-C-methyl-D-erythritol 4-phosphate (MEP). The chain is 2-C-methyl-D-erythritol 4-phosphate cytidylyltransferase from Crocosphaera subtropica (strain ATCC 51142 / BH68) (Cyanothece sp. (strain ATCC 51142)).